A 418-amino-acid chain; its full sequence is L-rhamnose isomerase (418 aa).

Mn(2+) contacts are provided by histidine 262, aspartate 294, and aspartate 296.

This sequence belongs to the rhamnose isomerase family. As to quaternary structure, homotetramer. Requires Mn(2+) as cofactor.

The protein localises to the cytoplasm. The enzyme catalyses L-rhamnopyranose = L-rhamnulose. The protein operates within carbohydrate degradation; L-rhamnose degradation; glycerone phosphate from L-rhamnose: step 1/3. Functionally, catalyzes the interconversion of L-rhamnose and L-rhamnulose. In Yersinia pestis bv. Antiqua (strain Antiqua), this protein is L-rhamnose isomerase.